Consider the following 289-residue polypeptide: Homeobox protein engrailed-2 (289 aa).

Basic and acidic residues-rich tracts occupy residues Met1–Ala12 and Glu60–Arg83. 2 disordered regions span residues Met1–Pro166 and Ser179–Ala206. Positions Val96–Gly114 are enriched in gly residues. Residues Leu142 to Ser160 show a composition bias toward low complexity. The homeobox DNA-binding region spans Asp200–Thr259.

This sequence belongs to the engrailed homeobox family.

It is found in the nucleus. This is Homeobox protein engrailed-2 (EN2) from Gallus gallus (Chicken).